An 85-amino-acid polypeptide reads, in one-letter code: Large ribosomal subunit protein bL27 (85 aa).

The interval 1–21 is disordered; it reads MAHKKAGGSSRNGRDSEGRRL.

This sequence belongs to the bacterial ribosomal protein bL27 family.

This Rhodospirillum rubrum (strain ATCC 11170 / ATH 1.1.1 / DSM 467 / LMG 4362 / NCIMB 8255 / S1) protein is Large ribosomal subunit protein bL27.